We begin with the raw amino-acid sequence, 472 residues long: N(6)-adenine-specific methyltransferase METTL4 (472 aa).

This sequence belongs to the MT-A70-like family.

It is found in the nucleus. The protein resides in the cytoplasm. Its subcellular location is the cytosol. It localises to the mitochondrion matrix. It catalyses the reaction a 2'-O-methyladenosine in U2 snRNA + S-adenosyl-L-methionine = an N(6)-methyl-2'-O-methyladenosine in U2 snRNA + S-adenosyl-L-homocysteine + H(+). The enzyme catalyses a 2'-deoxyadenosine in DNA + S-adenosyl-L-methionine = an N(6)-methyl-2'-deoxyadenosine in DNA + S-adenosyl-L-homocysteine + H(+). Its function is as follows. N(6)-adenine-specific methyltransferase that can methylate both RNAs and DNA. Acts as a N(6)-adenine-specific RNA methyltransferase by catalyzing formation of N6,2'-O-dimethyladenosine (m6A(m)) on internal positions of U2 small nuclear RNA (snRNA): methylates the 6th position of adenine residues with a pre-deposited 2'-O-methylation. Internal m6A(m) methylation of snRNAs regulates RNA splicing. Also able to act as a N(6)-adenine-specific DNA methyltransferase by mediating methylation of DNA on the 6th position of adenine (N(6)-methyladenosine). The existence of N(6)-methyladenosine (m6A) on DNA is however unclear in mammals, and additional evidences are required to confirm the role of the N(6)-adenine-specific DNA methyltransferase activity of METTL4 in vivo. Acts as a regulator of mitochondrial transcript levels and mitochondrial DNA (mtDNA) copy number by mediating mtDNA N(6)-methylation: m6A on mtDNA reduces transcription by repressing TFAM DNA-binding and bending. N(6)-methyladenosine deposition by METTL4 regulates Polycomb silencing by triggering ubiquitination and degradation of sensor proteins ASXL1 and MPND, leading to inactivation of the PR-DUB complex and subsequent preservation of Polycomb silencing. The chain is N(6)-adenine-specific methyltransferase METTL4 from Homo sapiens (Human).